A 143-amino-acid polypeptide reads, in one-letter code: Acetyltransferase plu1384 (143 aa).

One can recognise an N-acetyltransferase domain in the interval methionine 1 to isoleucine 138.

This sequence belongs to the acetyltransferase family. YpeA subfamily.

This is Acetyltransferase plu1384 from Photorhabdus laumondii subsp. laumondii (strain DSM 15139 / CIP 105565 / TT01) (Photorhabdus luminescens subsp. laumondii).